The primary structure comprises 435 residues: Eukaryotic translation initiation factor 3 subunit E (435 aa).

One can recognise a PCI domain in the interval 219–392 (FFNHAKGRDL…GHVVMGTQPL (174 aa)).

The protein belongs to the eIF-3 subunit E family. As to quaternary structure, component of the eukaryotic translation initiation factor 3 (eIF-3) complex.

It localises to the cytoplasm. In terms of biological role, component of the eukaryotic translation initiation factor 3 (eIF-3) complex, which is involved in protein synthesis of a specialized repertoire of mRNAs and, together with other initiation factors, stimulates binding of mRNA and methionyl-tRNAi to the 40S ribosome. The eIF-3 complex specifically targets and initiates translation of a subset of mRNAs involved in cell proliferation. The polypeptide is Eukaryotic translation initiation factor 3 subunit E (eIF3-S6) (Aedes aegypti (Yellowfever mosquito)).